The primary structure comprises 492 residues: Prostaglandin E2 receptor EP4 subtype (492 aa).

Over 1–19 (MSIPGTNASSSQASNPLNS) the chain is Extracellular. Residue Asn7 is glycosylated (N-linked (GlcNAc...) asparagine). Residues 20 to 43 (PVTIPAVMFIFGVVGNLVAIVVLC) form a helical membrane-spanning segment. At 44–55 (KSRKEQKETTFY) the chain is on the cytoplasmic side. Residues 56 to 79 (TLVCGLAVTDLLGTLLVSPVTIAT) form a helical membrane-spanning segment. Topologically, residues 80 to 96 (YLKGQWPGGHALCEYST) are extracellular. Residues Cys92 and Cys170 are joined by a disulfide bond. A helical membrane pass occupies residues 97–115 (FILLFFGLSGLSIICAMSI). At 116–135 (ERYLAINHAYFYSHYVDKRL) the chain is on the cytoplasmic side. The chain crosses the membrane as a helical span at residues 136 to 160 (AGLTLFAVYASNVLFCALPSMGLGS). Residues 161–184 (SRLQYPATWCFIDWTTNVTAHAAF) lie on the Extracellular side of the membrane. Residues 185-211 (SYMYAGFSSFLILATVLCNVLVCGALL) form a helical membrane-spanning segment. At 212–273 (RMHRQFMRRT…RSFRRIAGAE (62 aa)) the chain is on the cytoplasmic side. Residues 274–301 (IQMVILLIATSLVVLICSIPLVVRVFVN) traverse the membrane as a helical segment. The Extracellular segment spans residues 302–318 (QLYRPQLEPVIGKNPDL). Residues 319 to 338 (QAIRIASVSPILDPWIYILL) traverse the membrane as a helical segment. The Cytoplasmic portion of the chain corresponds to 339 to 492 (RKTVLSKAIE…ETLNLSEKCI (154 aa)). A compositionally biased stretch (basic and acidic residues) spans 361–374 (RRERSGPHCSDSRR). Residues 361–383 (RRERSGPHCSDSRRTSSAVSGHS) are disordered. Ser380, Ser383, Ser385, and Ser388 each carry phosphoserine.

Belongs to the G-protein coupled receptor 1 family. In terms of assembly, interacts with FEM1A. In terms of processing, phosphorylation mediates agonist-mediated desensitization by promoting cytoplasmic retention.

Its subcellular location is the cell membrane. In terms of biological role, receptor for prostaglandin E2 (PGE2). The activity of this receptor is mediated by G(s) proteins that stimulate adenylate cyclase. Has a relaxing effect on smooth muscle. May play an important role in regulating renal hemodynamics, intestinal epithelial transport, adrenal aldosterone secretion, and uterine function. This Bos taurus (Bovine) protein is Prostaglandin E2 receptor EP4 subtype (PTGER4).